The chain runs to 149 residues: Putative pre-16S rRNA nuclease (149 aa).

It belongs to the YqgF nuclease family.

Its subcellular location is the cytoplasm. Functionally, could be a nuclease involved in processing of the 5'-end of pre-16S rRNA. The sequence is that of Putative pre-16S rRNA nuclease from Synechococcus elongatus (strain ATCC 33912 / PCC 7942 / FACHB-805) (Anacystis nidulans R2).